A 174-amino-acid chain; its full sequence is Ribosome maturation factor RimP (174 aa).

The protein belongs to the RimP family.

Its subcellular location is the cytoplasm. Required for maturation of 30S ribosomal subunits. This is Ribosome maturation factor RimP from Acinetobacter baylyi (strain ATCC 33305 / BD413 / ADP1).